The sequence spans 325 residues: Foldase protein PrsA (325 aa).

The first 20 residues, 1-20, serve as a signal peptide directing secretion; it reads MKLMNKIIVPVTASALLLGA. Residue Cys-21 is the site of N-palmitoyl cysteine attachment. Residue Cys-21 is the site of S-diacylglycerol cysteine attachment. Residues 139 to 245 enclose the PpiC domain; sequence ENSKKTSHIL…YGYHIIKADK (107 aa). Disordered stretches follow at residues 159–200 and 303–325; these read EGLS…SAKK and PDKIKQQQQQQSQGGSGLTNSGS.

Belongs to the PrsA family.

It is found in the cell membrane. The catalysed reaction is [protein]-peptidylproline (omega=180) = [protein]-peptidylproline (omega=0). Its function is as follows. Plays a major role in protein secretion by helping the post-translocational extracellular folding of several secreted proteins. This is Foldase protein PrsA from Staphylococcus epidermidis (strain ATCC 35984 / DSM 28319 / BCRC 17069 / CCUG 31568 / BM 3577 / RP62A).